The following is a 194-amino-acid chain: ATP-dependent Clp protease proteolytic subunit 3 (194 aa).

Ser-96 serves as the catalytic Nucleophile. Residue His-121 is part of the active site.

This sequence belongs to the peptidase S14 family. As to quaternary structure, fourteen ClpP subunits assemble into 2 heptameric rings which stack back to back to give a disk-like structure with a central cavity, resembling the structure of eukaryotic proteasomes.

The protein localises to the cytoplasm. It carries out the reaction Hydrolysis of proteins to small peptides in the presence of ATP and magnesium. alpha-casein is the usual test substrate. In the absence of ATP, only oligopeptides shorter than five residues are hydrolyzed (such as succinyl-Leu-Tyr-|-NHMec, and Leu-Tyr-Leu-|-Tyr-Trp, in which cleavage of the -Tyr-|-Leu- and -Tyr-|-Trp bonds also occurs).. Its function is as follows. Cleaves peptides in various proteins in a process that requires ATP hydrolysis. Has a chymotrypsin-like activity. Plays a major role in the degradation of misfolded proteins. In Rhizobium johnstonii (strain DSM 114642 / LMG 32736 / 3841) (Rhizobium leguminosarum bv. viciae), this protein is ATP-dependent Clp protease proteolytic subunit 3.